The sequence spans 206 residues: Large ribosomal subunit protein uL4 (206 aa).

Residues 42–54 (RRQQGTHQSQGRS) show a composition bias toward polar residues. A disordered region spans residues 42–94 (RRQQGTHQSQGRSDVSRTGAKMFKQKGTGRARHSSARAPQFRGGGKAHGPVFR). Basic residues predominate over residues 64–76 (FKQKGTGRARHSS).

It belongs to the universal ribosomal protein uL4 family. As to quaternary structure, part of the 50S ribosomal subunit.

One of the primary rRNA binding proteins, this protein initially binds near the 5'-end of the 23S rRNA. It is important during the early stages of 50S assembly. It makes multiple contacts with different domains of the 23S rRNA in the assembled 50S subunit and ribosome. In terms of biological role, forms part of the polypeptide exit tunnel. The chain is Large ribosomal subunit protein uL4 from Bartonella tribocorum (strain CIP 105476 / IBS 506).